We begin with the raw amino-acid sequence, 213 residues long: Eukaryotic translation initiation factor isoform 4E (213 aa).

The segment at 1–37 is disordered; sequence MATEVAAAVPPPQLDAEENSGLEAAAAEAKIQPSSGP. MRNA-binding positions include 56 to 61, Lys88, and 106 to 107; these read QGAAWG and WE. A disulfide bridge links Cys111 with Cys150. MRNA-binding positions include 157–162 and 202–205; these read RQRQDK and KRER.

The protein belongs to the eukaryotic initiation factor 4E family. In terms of assembly, EIF4F is a multi-subunit complex, the composition of which varies with external and internal environmental conditions. It is composed of at least EIF4A, EIF4E and EIF4G. EIF4E is also known to interact with other partners. In higher plants two isoforms of EIF4F have been identified, named isoform EIF4F and isoform EIF(iso)4F. Isoform EIF4F has subunits p220 and p26, whereas isoform EIF(iso)4F has subunits p82 and p28. As to quaternary structure, (Microbial infection) Interacts with potyvirus viral genome-linked protein (VPg) of plum pox virus (PPV) strain D both in nucleus and cytoplasm; this interaction is possible in susceptible hosts but is impaired in resistant plants. Post-translationally, according to the redox status, the Cys-111-Cys-150 disulfide bridge may have a role in regulating protein function by affecting its ability to bind capped mRNA. In terms of tissue distribution, mostly expressed in leaves, flower buds, leaf buds and anthers, to a lower extent in roots, stems and green immature fruit, and, at low levels, in petals.

Its subcellular location is the cytoplasm. The protein localises to the nucleus. Functionally, component of the protein complex eIF4F, which is involved in the recognition of the mRNA cap, ATP-dependent unwinding of 5'-terminal secondary structure and recruitment of mRNA to the ribosome. Recognizes and binds the 7-methylguanosine-containing mRNA cap during an early step in the initiation of protein synthesis and facilitates ribosome binding by inducing the unwinding of the mRNAs secondary structures. Key component of recessive resistance to potyviruses such as the plum pox virus (PPV) strain D. In terms of biological role, (Microbial infection) Susceptibility host factor required for viral infection by recruiting viral RNAs to the host ribosomal complex via an interaction with viral genome-linked protein (VPg). This chain is Eukaryotic translation initiation factor isoform 4E, found in Prunus domestica (Garden plum).